Here is a 298-residue protein sequence, read N- to C-terminus: Protoheme IX farnesyltransferase (298 aa).

The next 9 membrane-spanning stretches (helical) occupy residues 16–36 (VVAL…PDMP), 45–65 (ALGF…NQLL), 93–113 (VFAG…VNVI), 114–134 (TAVL…VYLK), 141–161 (IVIG…AVTG), 172–192 (SLLV…LAIF), 218–238 (ILVY…VGMS), 241–261 (FYLG…WRML), and 277–297 (IVYL…LPWV).

It belongs to the UbiA prenyltransferase family. Protoheme IX farnesyltransferase subfamily.

The protein resides in the cell inner membrane. The catalysed reaction is heme b + (2E,6E)-farnesyl diphosphate + H2O = Fe(II)-heme o + diphosphate. The protein operates within porphyrin-containing compound metabolism; heme O biosynthesis; heme O from protoheme: step 1/1. In terms of biological role, converts heme B (protoheme IX) to heme O by substitution of the vinyl group on carbon 2 of heme B porphyrin ring with a hydroxyethyl farnesyl side group. The chain is Protoheme IX farnesyltransferase from Xanthomonas axonopodis pv. citri (strain 306).